Reading from the N-terminus, the 406-residue chain is Putative competence-damage inducible protein (406 aa).

It belongs to the CinA family.

In Natranaerobius thermophilus (strain ATCC BAA-1301 / DSM 18059 / JW/NM-WN-LF), this protein is Putative competence-damage inducible protein.